Reading from the N-terminus, the 261-residue chain is Cytochrome c oxidase subunit 3 (261 aa).

Over 1–15 (MTHQTHAYHMVNPSP) the chain is Mitochondrial matrix. The chain crosses the membrane as a helical span at residues 16–34 (WPLTGALSALLMTFGLIMW). At 35 to 40 (FHFNST) the chain is on the mitochondrial intermembrane side. A helical transmembrane segment spans residues 41 to 66 (ALLMLGLTTNMLTMYQWWRDIIREST). The Mitochondrial matrix segment spans residues 67–72 (FQGHHT). Residues 73–105 (PVVQKGLRYGMILFIISEVLFFTGFFWAFYHSS) traverse the membrane as a helical segment. The Mitochondrial intermembrane portion of the chain corresponds to 106–128 (LAPTPELGGCWPPTGIHPLNPLE). A helical membrane pass occupies residues 129–152 (VPLLNTSVLLASGVSITWAHHSLM). Residues 153–155 (EGH) are Mitochondrial matrix-facing. Residues 156–183 (RNHMLQALFITIALGVYFTLLQASEYYE) traverse the membrane as a helical segment. The Mitochondrial intermembrane portion of the chain corresponds to 184-190 (APFTISD). The chain crosses the membrane as a helical span at residues 191–223 (GVYGSTFFVATGFHGLHVIIGSTFLIVCFFRQL). The Mitochondrial matrix portion of the chain corresponds to 224–232 (KFHFTSSHH). Residues 233–256 (FGFEAAAWYWHFVDVVWLFLYVSI) traverse the membrane as a helical segment. Residues 257 to 261 (YWWGS) are Mitochondrial intermembrane-facing.

The protein belongs to the cytochrome c oxidase subunit 3 family. As to quaternary structure, component of the cytochrome c oxidase (complex IV, CIV), a multisubunit enzyme composed of 14 subunits. The complex is composed of a catalytic core of 3 subunits MT-CO1, MT-CO2 and MT-CO3, encoded in the mitochondrial DNA, and 11 supernumerary subunits COX4I, COX5A, COX5B, COX6A, COX6B, COX6C, COX7A, COX7B, COX7C, COX8 and NDUFA4, which are encoded in the nuclear genome. The complex exists as a monomer or a dimer and forms supercomplexes (SCs) in the inner mitochondrial membrane with NADH-ubiquinone oxidoreductase (complex I, CI) and ubiquinol-cytochrome c oxidoreductase (cytochrome b-c1 complex, complex III, CIII), resulting in different assemblies (supercomplex SCI(1)III(2)IV(1) and megacomplex MCI(2)III(2)IV(2)).

It localises to the mitochondrion inner membrane. It catalyses the reaction 4 Fe(II)-[cytochrome c] + O2 + 8 H(+)(in) = 4 Fe(III)-[cytochrome c] + 2 H2O + 4 H(+)(out). Functionally, component of the cytochrome c oxidase, the last enzyme in the mitochondrial electron transport chain which drives oxidative phosphorylation. The respiratory chain contains 3 multisubunit complexes succinate dehydrogenase (complex II, CII), ubiquinol-cytochrome c oxidoreductase (cytochrome b-c1 complex, complex III, CIII) and cytochrome c oxidase (complex IV, CIV), that cooperate to transfer electrons derived from NADH and succinate to molecular oxygen, creating an electrochemical gradient over the inner membrane that drives transmembrane transport and the ATP synthase. Cytochrome c oxidase is the component of the respiratory chain that catalyzes the reduction of oxygen to water. Electrons originating from reduced cytochrome c in the intermembrane space (IMS) are transferred via the dinuclear copper A center (CU(A)) of subunit 2 and heme A of subunit 1 to the active site in subunit 1, a binuclear center (BNC) formed by heme A3 and copper B (CU(B)). The BNC reduces molecular oxygen to 2 water molecules using 4 electrons from cytochrome c in the IMS and 4 protons from the mitochondrial matrix. The sequence is that of Cytochrome c oxidase subunit 3 (MT-CO3) from Tragelaphus oryx (Eland).